A 338-amino-acid polypeptide reads, in one-letter code: MEMTHYEKTPLIRQVFNNGKTNSWFYVKHEILQPGGSFKSRGIGHLIRKSNEEALSEGSGKLAVFSSSGGNAGLAAATACRSMALNCSVVVPKTTKPRMVKKIQSAGAKVIIHGDHWGEADEYLRHKLMAQESQHGSKTLYVHPFDNETIWEGHSTIVDEIIEQLKENDISLPRVKALVCSVGGGGLFSGIIKGLDRNHLAEKIPVVAVETAGCDVLNKSLKKGSPVTLEKLTSVATSLASPYIASFAFESFNKYGCKSVVLSDQDVLATCLRYADDYNFIVEPACGASLHLCYHPEILEDILEQKIYEDDIVIIIACGGSCMTYEDLVKASSTLNVS.

Lysine 39 carries the post-translational modification N6-(pyridoxal phosphate)lysine.

It belongs to the serine/threonine dehydratase family. It depends on pyridoxal 5'-phosphate as a cofactor.

The protein resides in the cytoplasm. It carries out the reaction L-serine = pyruvate + NH4(+). It functions in the pathway carbohydrate biosynthesis; gluconeogenesis. The sequence is that of L-serine dehydratase (SDL1) from Saccharomyces cerevisiae (strain RM11-1a) (Baker's yeast).